The chain runs to 199 residues: GTP cyclohydrolase 1 (199 aa).

Zn(2+) contacts are provided by cysteine 89, histidine 92, and cysteine 161.

This sequence belongs to the GTP cyclohydrolase I family. Toroid-shaped homodecamer, composed of two pentamers of five dimers.

It carries out the reaction GTP + H2O = 7,8-dihydroneopterin 3'-triphosphate + formate + H(+). It participates in cofactor biosynthesis; 7,8-dihydroneopterin triphosphate biosynthesis; 7,8-dihydroneopterin triphosphate from GTP: step 1/1. This Bifidobacterium longum (strain NCC 2705) protein is GTP cyclohydrolase 1.